The primary structure comprises 309 residues: NAD-dependent protein deacylase sirtuin-5A, mitochondrial (309 aa).

Residues 1–35 (MILLTFHTRRLVSHAYCGLKPASQKKSIALEMTRP) constitute a mitochondrion transit peptide. The Deacetylase sirtuin-type domain maps to 36 to 306 (SSNLADFREA…PPALARHETE (271 aa)). 57–76 (GAGVSAESGVPTFRGAGGYW) serves as a coordination point for NAD(+). Substrate contacts are provided by Y101 and R104. 139 to 142 (QNID) is an NAD(+) binding site. Residue H157 is the Proton acceptor of the active site. Residues C165, C168, C206, and C211 each coordinate Zn(2+). NAD(+)-binding positions include 248-250 (GTS), 274-276 (NME), and C292.

It belongs to the sirtuin family. Class III subfamily. Zn(2+) is required as a cofactor.

Its subcellular location is the mitochondrion. It is found in the cytoplasm. The protein resides in the cytosol. The protein localises to the nucleus. The catalysed reaction is N(6)-malonyl-L-lysyl-[protein] + NAD(+) + H2O = 2''-O-malonyl-ADP-D-ribose + nicotinamide + L-lysyl-[protein]. It carries out the reaction N(6)-succinyl-L-lysyl-[protein] + NAD(+) + H2O = 2''-O-succinyl-ADP-D-ribose + nicotinamide + L-lysyl-[protein]. It catalyses the reaction N(6)-glutaryl-L-lysyl-[protein] + NAD(+) + H2O = 2''-O-glutaryl-ADP-D-ribose + nicotinamide + L-lysyl-[protein]. Functionally, NAD-dependent lysine demalonylase, desuccinylase and deglutarylase that specifically removes malonyl, succinyl and glutaryl groups on target proteins. Has weak NAD-dependent protein deacetylase activity; however this activity may not be physiologically relevant in vivo. In Xenopus laevis (African clawed frog), this protein is NAD-dependent protein deacylase sirtuin-5A, mitochondrial (sirt5-a).